A 411-amino-acid polypeptide reads, in one-letter code: Peptidase T (411 aa).

Position 78 (His78) interacts with Zn(2+). Residue Asp80 is part of the active site. Asp140 provides a ligand contact to Zn(2+). Glu173 serves as the catalytic Proton acceptor. Zn(2+) contacts are provided by Glu174, Asp196, and His379.

It belongs to the peptidase M20B family. Zn(2+) is required as a cofactor.

It localises to the cytoplasm. It carries out the reaction Release of the N-terminal residue from a tripeptide.. Its function is as follows. Cleaves the N-terminal amino acid of tripeptides. The polypeptide is Peptidase T (Yersinia pseudotuberculosis serotype O:1b (strain IP 31758)).